Here is a 108-residue protein sequence, read N- to C-terminus: MLASACLLTCLGQIAQKYAVQGWRGAFPGVFAALRSLWLALACLGSGLLIWLLVLQRLDVGIAYPMLGVNFVLITLAGRYVFNEPVDVRHWLGIALILVGVFQLGRQA.

Helical transmembrane passes span 36-56 (SLWLALACLGSGLLIWLLVLQ), 58-78 (LDVGIAYPMLGVNFVLITLAG), and 85-105 (PVDVRHWLGIALILVGVFQLG).

It belongs to the ArnE family. In terms of assembly, heterodimer of ArnE and ArnF.

It is found in the cell inner membrane. It functions in the pathway bacterial outer membrane biogenesis; lipopolysaccharide biosynthesis. Functionally, translocates 4-amino-4-deoxy-L-arabinose-phosphoundecaprenol (alpha-L-Ara4N-phosphoundecaprenol) from the cytoplasmic to the periplasmic side of the inner membrane. This Pseudomonas syringae pv. syringae (strain B728a) protein is Probable 4-amino-4-deoxy-L-arabinose-phosphoundecaprenol flippase subunit ArnE.